A 124-amino-acid chain; its full sequence is Cholera enterotoxin subunit B (124 aa).

The first 21 residues, 1-21, serve as a signal peptide directing secretion; sequence MIKLKFGVFFTVLLSSAYAHG. Cysteines 30 and 107 form a disulfide.

As to quaternary structure, the holotoxin (choleragen) consists of a pentameric ring of B subunits whose central pore is occupied by the A subunit. The A subunit contains two chains, A1 and A2, linked by a disulfide bridge.

It is found in the secreted. It localises to the host cell membrane. In terms of biological role, the B subunit pentameric ring directs the A subunit to its target by binding to the GM1 gangliosides present on the surface of the intestinal epithelial cells. It can bind five GM1 gangliosides. It has no toxic activity by itself. In Vibrio cholerae serotype O1 (strain ATCC 39315 / El Tor Inaba N16961), this protein is Cholera enterotoxin subunit B (ctxB).